Reading from the N-terminus, the 429-residue chain is Glutamate-1-semialdehyde 2,1-aminomutase (429 aa).

Lys-265 is subject to N6-(pyridoxal phosphate)lysine.

It belongs to the class-III pyridoxal-phosphate-dependent aminotransferase family. HemL subfamily. As to quaternary structure, homodimer. Pyridoxal 5'-phosphate serves as cofactor.

It localises to the cytoplasm. It carries out the reaction (S)-4-amino-5-oxopentanoate = 5-aminolevulinate. The protein operates within porphyrin-containing compound metabolism; protoporphyrin-IX biosynthesis; 5-aminolevulinate from L-glutamyl-tRNA(Glu): step 2/2. This is Glutamate-1-semialdehyde 2,1-aminomutase from Shewanella halifaxensis (strain HAW-EB4).